Here is a 599-residue protein sequence, read N- to C-terminus: uncharacterized protein (599 aa).

Residues 1 to 10 (MEQQSENVYF) are compositionally biased toward polar residues. The segment at 1 to 146 (MEQQSENVYF…EPSFTLTELP (146 aa)) is disordered. A compositionally biased stretch (low complexity) spans 11 to 20 (SGSESESLSD). Positions 24–44 (RAQPQNQNSDNSRSASLTPPD) are enriched in polar residues. 2 stretches are compositionally biased toward acidic residues: residues 46–56 (SDLEDYVDSDS) and 89–114 (NGSD…EEED). Positions 118–127 (RSSSRSAMDI) are enriched in low complexity. The segment covering 128 to 138 (SSEEDSGDDEP) has biased composition (acidic residues).

The protein belongs to the IIV-6 229L family.

This is an uncharacterized protein from Aedes vexans (Inland floodwater mosquito).